Consider the following 577-residue polypeptide: Cell pattern formation-associated protein stuA (577 aa).

The interval 1-41 (MNQPQPYMDQHAPAPPPASNMTQYSNYGAPQPLQPATHGYG) is disordered. Positions 19–28 (SNMTQYSNYG) are enriched in polar residues. Positions 111 to 217 (RVTATLWEDE…HNIGALLYHP (107 aa)) constitute an HTH APSES-type domain. The H-T-H motif DNA-binding region spans 145-166 (GTKLLNVAGMTRGRRDGILKSE). 2 disordered regions span residues 228 to 487 (ATMA…QLPS) and 518 to 577 (QYPA…AVRR). Composition is skewed to polar residues over residues 238-251 (SQEY…TQAP) and 319-333 (AVNS…SQGM). Over residues 334-350 (PQYQTSQPPYTQSYSTP) the composition is skewed to low complexity. The span at 351 to 364 (GSYSQPQYTHQQPG) shows a compositional bias: polar residues. Basic and acidic residues predominate over residues 390 to 399 (AENDHPDHKV). Low complexity predominate over residues 465–479 (TPRTTNPYTGYNNTP). The nuclear localization domain stretch occupies residues 526-552 (KRGREDDDQVDPYGRPSSALGEHKRQR).

Belongs to the EFG1/PHD1/stuA family.

It is found in the nucleus. In terms of biological role, transcription factor that regulates asexual reproduction. Binds the StuA-response elements (StRE) with the consensus sequence 5'-(A/T)CGCG(T/A)N(A/C)-3' at the promoters of target genes. In Dothistroma septosporum (strain NZE10 / CBS 128990) (Red band needle blight fungus), this protein is Cell pattern formation-associated protein stuA.